We begin with the raw amino-acid sequence, 132 residues long: Small ribosomal subunit protein uS11 (132 aa).

The protein belongs to the universal ribosomal protein uS11 family. Part of the 30S ribosomal subunit.

In terms of biological role, located on the platform of the 30S subunit. This is Small ribosomal subunit protein uS11 from Sulfurisphaera tokodaii (strain DSM 16993 / JCM 10545 / NBRC 100140 / 7) (Sulfolobus tokodaii).